The primary structure comprises 546 residues: Chaperonin GroEL 1 (546 aa).

Residues 30–33, K51, 87–91, G415, 479–481, and D495 contribute to the ATP site; these read TLGP, DGTTT, and NAA.

This sequence belongs to the chaperonin (HSP60) family. In terms of assembly, forms a cylinder of 14 subunits composed of two heptameric rings stacked back-to-back. Interacts with the co-chaperonin GroES.

It localises to the cytoplasm. It catalyses the reaction ATP + H2O + a folded polypeptide = ADP + phosphate + an unfolded polypeptide.. In terms of biological role, together with its co-chaperonin GroES, plays an essential role in assisting protein folding. The GroEL-GroES system forms a nano-cage that allows encapsulation of the non-native substrate proteins and provides a physical environment optimized to promote and accelerate protein folding. The polypeptide is Chaperonin GroEL 1 (Paraburkholderia xenovorans (strain LB400)).